A 147-amino-acid chain; its full sequence is Small ribosomal subunit protein uS5 (147 aa).

The region spanning 9 to 72 (FEEVVVNISR…DNAFKNITTV (64 aa)) is the S5 DRBM domain.

Belongs to the universal ribosomal protein uS5 family. In terms of assembly, part of the 30S ribosomal subunit. Contacts proteins S4 and S8.

Its function is as follows. With S4 and S12 plays an important role in translational accuracy. Located at the back of the 30S subunit body where it stabilizes the conformation of the head with respect to the body. In Nitratiruptor sp. (strain SB155-2), this protein is Small ribosomal subunit protein uS5.